A 479-amino-acid chain; its full sequence is Aldehyde dehydrogenase family 3 member B3 (479 aa).

Catalysis depends on residues glutamate 223 and cysteine 257. The S-geranylgeranyl cysteine moiety is linked to residue cysteine 476. The propeptide at 477–479 (TLL) is removed in mature form.

This sequence belongs to the aldehyde dehydrogenase family. In terms of processing, geranylgeranylation is important for membrane localization and enzyme activity. Expressed in testis, kidney, small intestine, spleen, white adipose tissue, liver and lung.

It is found in the cell membrane. It carries out the reaction an aldehyde + NAD(+) + H2O = a carboxylate + NADH + 2 H(+). The enzyme catalyses hexadecanoate + NADH + 2 H(+) = hexadecanal + NAD(+) + H2O. The catalysed reaction is octanal + NAD(+) + H2O = octanoate + NADH + 2 H(+). Functionally, oxidizes medium and long chain aldehydes into non-toxic fatty acids. This Mus musculus (Mouse) protein is Aldehyde dehydrogenase family 3 member B3.